Consider the following 207-residue polypeptide: Outer-membrane lipoprotein LolB (207 aa).

The signal sequence occupies residues 1–21 (MPTKTVRCLRLLPLASLLLAA). Cys22 carries the N-palmitoyl cysteine lipid modification. Cys22 carries S-diacylglycerol cysteine lipidation.

The protein belongs to the LolB family. Monomer.

It localises to the cell outer membrane. In terms of biological role, plays a critical role in the incorporation of lipoproteins in the outer membrane after they are released by the LolA protein. This is Outer-membrane lipoprotein LolB from Pectobacterium atrosepticum (strain SCRI 1043 / ATCC BAA-672) (Erwinia carotovora subsp. atroseptica).